The following is a 350-amino-acid chain: tRNA N6-adenosine threonylcarbamoyltransferase (350 aa).

Positions 109 and 113 each coordinate Fe cation. Residues 136 to 140, D169, G182, D186, and N284 contribute to the substrate site; that span reads TVSGG. D312 is a Fe cation binding site.

It belongs to the KAE1 / TsaD family. Fe(2+) serves as cofactor.

It is found in the cytoplasm. The enzyme catalyses L-threonylcarbamoyladenylate + adenosine(37) in tRNA = N(6)-L-threonylcarbamoyladenosine(37) in tRNA + AMP + H(+). In terms of biological role, required for the formation of a threonylcarbamoyl group on adenosine at position 37 (t(6)A37) in tRNAs that read codons beginning with adenine. Is involved in the transfer of the threonylcarbamoyl moiety of threonylcarbamoyl-AMP (TC-AMP) to the N6 group of A37, together with TsaE and TsaB. TsaD likely plays a direct catalytic role in this reaction. The protein is tRNA N6-adenosine threonylcarbamoyltransferase of Chlorobium chlorochromatii (strain CaD3).